The chain runs to 251 residues: Flap endonuclease Xni (251 aa).

Aspartate 104 provides a ligand contact to Mg(2+). The 5'-3' exonuclease domain maps to 160-249; it reads VQPQQLPDYW…IDGNLQQLRL (90 aa). K(+)-binding residues include leucine 171, alanine 172, proline 180, valine 182, and isoleucine 185. An interaction with DNA region spans residues 184–189; the sequence is GIGPKS.

It belongs to the Xni family. It depends on Mg(2+) as a cofactor. Requires K(+) as cofactor.

Has flap endonuclease activity. During DNA replication, flap endonucleases cleave the 5'-overhanging flap structure that is generated by displacement synthesis when DNA polymerase encounters the 5'-end of a downstream Okazaki fragment. The sequence is that of Flap endonuclease Xni from Escherichia coli O7:K1 (strain IAI39 / ExPEC).